The following is a 546-amino-acid chain: Hydroxylamine reductase (546 aa).

Cys-3, Cys-6, Cys-18, and Cys-25 together coordinate [4Fe-4S] cluster. His-245, Glu-269, Cys-313, Cys-401, Cys-429, Cys-454, Glu-488, and Lys-490 together coordinate hybrid [4Fe-2O-2S] cluster. Cys-401 is modified (cysteine persulfide).

Belongs to the HCP family. The cofactor is [4Fe-4S] cluster. Hybrid [4Fe-2O-2S] cluster is required as a cofactor.

The protein localises to the cytoplasm. It carries out the reaction A + NH4(+) + H2O = hydroxylamine + AH2 + H(+). Its activity is regulated as follows. Inhibited by cyanide and by sulfide and iron reagents such as dithioerythritol, 2,2'-dipyridyl and o-phenanthroline. Functionally, could be involved in assimilation and/or detoxification of hydroxylamine, which is a toxic compound that may be formed during nitrate/nitrite assimilation. Catalyzes the reduction of hydroxylamine to form NH(3) and H(2)O. It has a low reductase activity with FAD, FMN, benzyl viologen and bromphenol blue as electrons donors, but it is not able to use NAD or NADP. The polypeptide is Hydroxylamine reductase (Rhodobacter capsulatus (Rhodopseudomonas capsulata)).